The chain runs to 384 residues: PqqA peptide cyclase (384 aa).

Residues 14 to 226 (IPAPVGLLAE…IRIVEAARER (213 aa)) form the Radical SAM core domain. Positions 28, 32, and 35 each coordinate [4Fe-4S] cluster.

The protein belongs to the radical SAM superfamily. PqqE family. As to quaternary structure, interacts with PqqD. The interaction is necessary for activity of PqqE. It depends on [4Fe-4S] cluster as a cofactor.

The catalysed reaction is [PQQ precursor protein] + S-adenosyl-L-methionine = E-Y cross-linked-[PQQ precursor protein] + 5'-deoxyadenosine + L-methionine + H(+). The protein operates within cofactor biosynthesis; pyrroloquinoline quinone biosynthesis. Its function is as follows. Catalyzes the cross-linking of a glutamate residue and a tyrosine residue in the PqqA protein as part of the biosynthesis of pyrroloquinoline quinone (PQQ). This chain is PqqA peptide cyclase, found in Methylorubrum populi (strain ATCC BAA-705 / NCIMB 13946 / BJ001) (Methylobacterium populi).